We begin with the raw amino-acid sequence, 312 residues long: Putative mitochondrial transporter UCP3 (312 aa).

Topologically, residues 1-10 are mitochondrial intermembrane; sequence MVGLKPSDVP. A helical transmembrane segment spans residues 11–32; the sequence is PTMAVKFLGAGTAACFADLVTF. Solcar repeat units follow at residues 11-105, 114-206, and 215-300; these read PTMA…VKQV, SSLT…LKEK, and DNFP…LKRA. The Mitochondrial matrix portion of the chain corresponds to 33-76; sequence PLDTAKVRLQIQGENQAVQTARLVQYRGVLGTILTMVRTEGPCS. Residues 77-99 form a helical membrane-spanning segment; sequence PYNGLVAGLQRQMSFASIRIGLY. The Mitochondrial intermembrane segment spans residues 100 to 119; sequence DSVKQVYTPKGADNSSLTTR. Residues 120–136 form a helical membrane-spanning segment; that stretch reads ILAGCTTGAMAVTCAQP. Residues 137-183 are Mitochondrial matrix-facing; the sequence is TDVVKVRFQASIHLGPSRSDRKYSGTMDAYRTIAREEGVRGLWKGTL. The chain crosses the membrane as a helical span at residues 184-200; that stretch reads PNIMRNAIVNCAEVVTY. Over 201–217 the chain is Mitochondrial intermembrane; sequence DILKEKLLDYHLLTDNF. A helical membrane pass occupies residues 218–237; it reads PCHFVSAFGAGFCATVVASP. Residues 238–271 are Mitochondrial matrix-facing; that stretch reads VDVVKTRYMNSPPGQYFSPLDCMIKMVAQEGPTA. The chain crosses the membrane as a helical span at residues 272–294; sequence FYKGFTPSFLRLGSWNVVMFVTY. Residues 279-301 are purine nucleotide binding; that stretch reads SFLRLGSWNVVMFVTYEQLKRAL. At 295-312 the chain is on the mitochondrial intermembrane side; sequence EQLKRALMKVQMLRESPF.

It belongs to the mitochondrial carrier (TC 2.A.29) family. In terms of assembly, interacts with HAX1; the interaction is direct and calcium-dependent. In terms of tissue distribution, only in skeletal muscle and heart. Also expressed in white and brown adipose tissues. Is more expressed in glycolytic than in oxidative skeletal muscles.

Its subcellular location is the mitochondrion inner membrane. With respect to regulation, the proton transporter activity is activated by fatty acids (in vitro). The proton transporter activity is inhibited by ATP and ADP (in vitro). The effect of Ubiquinone/coenzyme Q10 on the proton transporter activity in reconstituted membranes is unclear (in vitro). Functionally, putative transmembrane transporter that plays a role in mitochondrial metabolism via an as yet unclear mechanism. Originally, this mitochondrial protein was thought to act as a proton transmembrane transporter from the mitochondrial intermembrane space into the matrix, causing proton leaks through the inner mitochondrial membrane, thereby uncoupling mitochondrial membrane potential generation from ATP synthesis. However, this function is controversial and uncoupling may not be the function, or at least not the main function, but rather a consequence of more conventional metabolite transporter activity. The chain is Putative mitochondrial transporter UCP3 from Homo sapiens (Human).